The following is a 405-amino-acid chain: L-rhamnonate dehydratase (405 aa).

Residues His33 and Arg59 each contribute to the substrate site. 3 residues coordinate Mg(2+): Asp226, Glu252, and Glu280. The active-site Proton acceptor is His329. Position 349 (Glu349) interacts with substrate.

Belongs to the mandelate racemase/muconate lactonizing enzyme family. RhamD subfamily. As to quaternary structure, homooctamer; tetramer of dimers. It depends on Mg(2+) as a cofactor.

The enzyme catalyses L-rhamnonate = 2-dehydro-3-deoxy-L-rhamnonate + H2O. Functionally, catalyzes the dehydration of L-rhamnonate to 2-keto-3-deoxy-L-rhamnonate (KDR). The polypeptide is L-rhamnonate dehydratase (Salmonella paratyphi A (strain AKU_12601)).